Consider the following 156-residue polypeptide: Anaerobic nitrite reductase HB2 (156 aa).

One can recognise a Globin domain in the interval 2–151 (GFTDKQEALV…LASAIKAEMH (150 aa)). The Homodimerization motif lies at 35-39 (EIAPV). Heme b-binding residues include Ser45, Lys59, His63, and His98. A Homodimerization motif is present at residues 105-117 (DPHFEVVKEALLR).

Belongs to the plant globin family. Homodimer. Heme b serves as cofactor.

Its subcellular location is the cytoplasm. It is found in the nucleus. It carries out the reaction Fe(III)-heme b-[protein] + nitric oxide + H2O = Fe(II)-heme b-[protein] + nitrite + 2 H(+). Functionally, phytoglobin that reduces nitrite to nitric oxide (NO) under anoxic conditions (e.g. during flooding or in waterlogged soil). May not function as an oxygen storage or transport protein. Has an unusually high affinity for O(2) through an hexacoordinate heme iron because of a very low dissociation constant. The chain is Anaerobic nitrite reductase HB2 from Solanum lycopersicum (Tomato).